The following is a 390-amino-acid chain: Dynein regulatory complex subunit 5 (390 aa).

LRR repeat units lie at residues 182-205 (TETLTHLDLSNNSLDDDKVRMLAS), 210-233 (NLSITHLNLSHNKIADRGVRALAK), and 238-261 (HSVISLLELHDNQIHTEGAESLAR).

This sequence belongs to the DRC5 family. In terms of assembly, component of the nexin-dynein regulatory complex (N-DRC). Interacts with DRC1, DRC2, DRC3, DRC4, DRC7 and DRC11.

It localises to the cell projection. Its subcellular location is the cilium. The protein resides in the flagellum. It is found in the cytoplasm. The protein localises to the cytoskeleton. It localises to the flagellum axoneme. Its function is as follows. Component of the nexin-dynein regulatory complex (N-DRC) a key regulator of ciliary/flagellar motility which maintains the alignment and integrity of the distal axoneme and regulates microtubule sliding in motile axonemes. May play a role in the assembly of N-DRC. The polypeptide is Dynein regulatory complex subunit 5 (Chlamydomonas reinhardtii (Chlamydomonas smithii)).